The primary structure comprises 429 residues: Ribosomal RNA small subunit methyltransferase B (429 aa).

Residues 254–260, Asp-277, Asp-303, and Asp-322 contribute to the S-adenosyl-L-methionine site; that span reads CAAPGGK. Cys-375 functions as the Nucleophile in the catalytic mechanism. The segment at 397-419 is disordered; the sequence is ALSETGTPDQPGQQNLPGGEEGD. Residues 400 to 412 show a composition bias toward polar residues; that stretch reads ETGTPDQPGQQNL.

The protein belongs to the class I-like SAM-binding methyltransferase superfamily. RsmB/NOP family.

It is found in the cytoplasm. It catalyses the reaction cytidine(967) in 16S rRNA + S-adenosyl-L-methionine = 5-methylcytidine(967) in 16S rRNA + S-adenosyl-L-homocysteine + H(+). Its function is as follows. Specifically methylates the cytosine at position 967 (m5C967) of 16S rRNA. The protein is Ribosomal RNA small subunit methyltransferase B of Salmonella choleraesuis (strain SC-B67).